Consider the following 729-residue polypeptide: Hydroxamate siderophore receptor FhuE (729 aa).

A signal peptide spans 1-36; that stretch reads MLSTQFNRDNQYQAITKPSLLAGCIALALLPSAAFA. The short motif at 42–49 is the TonB box element; that stretch reads ETVIVEGS. The interval 48 to 72 is disordered; it reads GSATAPDDGENDYSVTSTSAGTKMQ. Positions 60-72 are enriched in polar residues; it reads YSVTSTSAGTKMQ. The TBDR plug domain occupies 74 to 183; sequence TQRDIPQSVT…PSAAINMVRK (110 aa). Residues Arg117, Arg142, Trp275, Tyr357, Asn373, and Trp416 each coordinate Fe(III)-coprogen. The 541-residue stretch at 189–729 folds into the TBDR beta-barrel domain; it reads EFKGDVSAEY…NFSITGTYQF (541 aa). Residues 712–729 carry the TonB C-terminal box motif; sequence SIVYGTPRNFSITGTYQF.

The protein belongs to the TonB-dependent receptor family.

Its subcellular location is the cell outer membrane. Involved in the active transport across the outer membrane of iron complexed with linear hydroxamate siderophores coprogen, rhodotorulic acid and ferrioxamine B. Binds Fe-coprogen with high affinity, rhodotorulic acid to a lesser extent, and weakly to ferrioxamine B. Selective for planar siderophores. Does not use cyclic siderophores ferrichrome nor ferrioxamine E as substrates. The sequence is that of Hydroxamate siderophore receptor FhuE from Escherichia coli (strain K12).